A 432-amino-acid chain; its full sequence is Serine hydroxymethyltransferase (432 aa).

(6S)-5,6,7,8-tetrahydrofolate-binding positions include leucine 131 and 135–137 (GHL). Lysine 240 carries the N6-(pyridoxal phosphate)lysine modification.

It belongs to the SHMT family. In terms of assembly, homodimer. Pyridoxal 5'-phosphate is required as a cofactor.

The protein resides in the cytoplasm. It carries out the reaction (6R)-5,10-methylene-5,6,7,8-tetrahydrofolate + glycine + H2O = (6S)-5,6,7,8-tetrahydrofolate + L-serine. The protein operates within one-carbon metabolism; tetrahydrofolate interconversion. It participates in amino-acid biosynthesis; glycine biosynthesis; glycine from L-serine: step 1/1. Catalyzes the reversible interconversion of serine and glycine with tetrahydrofolate (THF) serving as the one-carbon carrier. This reaction serves as the major source of one-carbon groups required for the biosynthesis of purines, thymidylate, methionine, and other important biomolecules. Also exhibits THF-independent aldolase activity toward beta-hydroxyamino acids, producing glycine and aldehydes, via a retro-aldol mechanism. This chain is Serine hydroxymethyltransferase, found in Acidiphilium cryptum (strain JF-5).